The sequence spans 355 residues: Isopentenyl-diphosphate delta-isomerase (355 aa).

12-13 (RK) provides a ligand contact to substrate. FMN is bound by residues Ser70, 71–73 (SMT), Ser101, and Asn130. 101–103 (SMR) provides a ligand contact to substrate. Residue Gln165 participates in substrate binding. Mg(2+) is bound at residue Glu166. Residues Lys197 and 308 to 309 (AG) each bind FMN.

It belongs to the IPP isomerase type 2 family. In terms of assembly, homooctamer. Dimer of tetramers. FMN is required as a cofactor. The cofactor is NADPH. It depends on Mg(2+) as a cofactor.

It is found in the cytoplasm. The catalysed reaction is isopentenyl diphosphate = dimethylallyl diphosphate. In terms of biological role, involved in the biosynthesis of isoprenoids. Catalyzes the 1,3-allylic rearrangement of the homoallylic substrate isopentenyl (IPP) to its allylic isomer, dimethylallyl diphosphate (DMAPP). This chain is Isopentenyl-diphosphate delta-isomerase, found in Chlorobium phaeovibrioides (strain DSM 265 / 1930) (Prosthecochloris vibrioformis (strain DSM 265)).